The primary structure comprises 359 residues: Gap junction alpha-5 protein (359 aa).

At 1–19 (MGDWSFLGEFLEEVHKHST) the chain is on the cytoplasmic side. A helical transmembrane segment spans residues 20–40 (VIGKVWLTVLFIFRMLVLGTA). Residues 41–76 (AESSWGDEQADFLCDTMQPGCENVCYDQAFPISHIR) lie on the Extracellular side of the membrane. A helical transmembrane segment spans residues 77–97 (YWVLQVIFVSTPSLVYLGHAV). Topologically, residues 98–165 (HMVRVQEKRK…CSILIRTTME (68 aa)) are cytoplasmic. The helical transmembrane segment at 166 to 186 (VAFIVGQYLLYGVFLDTLHVC) threads the bilayer. The Extracellular portion of the chain corresponds to 187–206 (RRSPCPHPVNCYVSRPTEKN). The helical transmembrane segment at 207–227 (VFIVFMLAVAGLSLFLSLAEL) threads the bilayer. Residues 228–359 (YHLGWKKIRQ…SKARSDDLSV (132 aa)) lie on the Cytoplasmic side of the membrane. Disordered stretches follow at residues 285–305 (SNKMASQQNTDNLSTEQVRSQ) and 317–359 (RYAQ…DLSV). Residues serine 354 and serine 358 each carry the phosphoserine modification.

This sequence belongs to the connexin family. Alpha-type (group II) subfamily. A connexon is composed of a hexamer of connexins.

It localises to the cell membrane. The protein resides in the cell junction. The protein localises to the gap junction. Functionally, one gap junction consists of a cluster of closely packed pairs of transmembrane channels, the connexons, through which materials of low MW diffuse from one cell to a neighboring cell. The polypeptide is Gap junction alpha-5 protein (GJA5) (Bos taurus (Bovine)).